The primary structure comprises 181 residues: Sodium/potassium-transporting ATPase subunit beta-1-interacting protein 3 (181 aa).

The next 4 membrane-spanning stretches (helical) occupy residues 2-22 (GCCT…LSAL), 35-55 (APIL…FGTI), 62-82 (IMVY…IICF), and 152-172 (VQIL…SISM).

This sequence belongs to the NKAIN family. As to quaternary structure, interacts with ATP1B1. As to expression, detected in the brain only and specifically in neurons. Expressed in multiple regions such as cerebral cortex, thalamus, hippocampus, olfactory bulb and brainstem as well as in cerebellum with low expression in granular cell layer.

Its subcellular location is the cell membrane. The protein is Sodium/potassium-transporting ATPase subunit beta-1-interacting protein 3 (Nkain3) of Mus musculus (Mouse).